The sequence spans 263 residues: 3-deoxy-manno-octulosonate cytidylyltransferase (263 aa).

Belongs to the KdsB family.

It localises to the cytoplasm. It catalyses the reaction 3-deoxy-alpha-D-manno-oct-2-ulosonate + CTP = CMP-3-deoxy-beta-D-manno-octulosonate + diphosphate. The protein operates within nucleotide-sugar biosynthesis; CMP-3-deoxy-D-manno-octulosonate biosynthesis; CMP-3-deoxy-D-manno-octulosonate from 3-deoxy-D-manno-octulosonate and CTP: step 1/1. It functions in the pathway bacterial outer membrane biogenesis; lipopolysaccharide biosynthesis. In terms of biological role, activates KDO (a required 8-carbon sugar) for incorporation into bacterial lipopolysaccharide in Gram-negative bacteria. The polypeptide is 3-deoxy-manno-octulosonate cytidylyltransferase (Burkholderia multivorans (strain ATCC 17616 / 249)).